A 154-amino-acid chain; its full sequence is SsrA-binding protein (154 aa).

This sequence belongs to the SmpB family.

Its subcellular location is the cytoplasm. Functionally, required for rescue of stalled ribosomes mediated by trans-translation. Binds to transfer-messenger RNA (tmRNA), required for stable association of tmRNA with ribosomes. tmRNA and SmpB together mimic tRNA shape, replacing the anticodon stem-loop with SmpB. tmRNA is encoded by the ssrA gene; the 2 termini fold to resemble tRNA(Ala) and it encodes a 'tag peptide', a short internal open reading frame. During trans-translation Ala-aminoacylated tmRNA acts like a tRNA, entering the A-site of stalled ribosomes, displacing the stalled mRNA. The ribosome then switches to translate the ORF on the tmRNA; the nascent peptide is terminated with the 'tag peptide' encoded by the tmRNA and targeted for degradation. The ribosome is freed to recommence translation, which seems to be the essential function of trans-translation. The protein is SsrA-binding protein of Treponema pallidum (strain Nichols).